Here is a 263-residue protein sequence, read N- to C-terminus: uncharacterized protein (263 aa).

The tract at residues 183-263 (APHDRPEGVP…PPSTNTKGAA (81 aa)) is disordered. Polar residues-rich tracts occupy residues 230–239 (SRPTAPSRPS) and 253–263 (TPPSTNTKGAA).

Its function is as follows. Probably does not play a direct role in plasmid integration or excision. This is an uncharacterized protein from Saccharopolyspora erythraea (Streptomyces erythraeus).